The sequence spans 328 residues: D-cysteine desulfhydrase (328 aa).

K51 bears the N6-(pyridoxal phosphate)lysine mark.

It belongs to the ACC deaminase/D-cysteine desulfhydrase family. As to quaternary structure, homodimer. Pyridoxal 5'-phosphate serves as cofactor.

The catalysed reaction is D-cysteine + H2O = hydrogen sulfide + pyruvate + NH4(+) + H(+). In terms of biological role, catalyzes the alpha,beta-elimination reaction of D-cysteine and of several D-cysteine derivatives. It could be a defense mechanism against D-cysteine. In Salmonella typhi, this protein is D-cysteine desulfhydrase.